We begin with the raw amino-acid sequence, 480 residues long: Ribosome assembly protein rrb1 (480 aa).

Disordered regions lie at residues 1-78 (MSKR…WLPG) and 155-176 (QHDE…ILEH). 2 stretches are compositionally biased toward acidic residues: residues 28 to 52 (VDTE…YIEA) and 158 to 172 (ENDD…EEDP). S163 and S166 each carry phosphoserine. 5 WD repeats span residues 183–225 (GACN…RSLD), 289–329 (SHTA…KTSA), 334–375 (AHPG…SSSS), 385–425 (WHRA…DEEE), and 446–480 (MGQQ…TITF).

As to quaternary structure, associates with ribosomal protein L3.

It is found in the cytoplasm. The protein localises to the nucleus. It localises to the nucleolus. In terms of biological role, involved in regulation of L3 expression and stability and plays a role in early 60S ribosomal subunit assembly. May be required for proper assembly of pre-ribosomal particles during early ribosome biogenesis, presumably by targeting L3 onto the 35S precursor rRNA. The sequence is that of Ribosome assembly protein rrb1 (rrb1) from Schizosaccharomyces pombe (strain 972 / ATCC 24843) (Fission yeast).